A 639-amino-acid polypeptide reads, in one-letter code: Complex I assembly factor Egm, mitochondrial (639 aa).

The transit peptide at 1–26 directs the protein to the mitochondrion; that stretch reads MRPNLFSGASRLLTYSRNGKLLTRGR. The interval 23–65 is disordered; it reads TRGRSTKATSSSLDSQHQDAATTEGGRAESVEESPEQQRKLPT. Positions 28–43 are enriched in polar residues; the sequence is TKATSSSLDSQHQDAA. A compositionally biased stretch (basic and acidic residues) spans 48 to 65; sequence GRAESVEESPEQQRKLPT.

The protein belongs to the acyl-CoA dehydrogenase family. In terms of assembly, associates with mitochondrial complex I assembly intermediates during its biogenesis. It depends on FAD as a cofactor.

The protein resides in the mitochondrion. Its function is as follows. As part of the MCIA complex, primarily participates in the assembly of the mitochondrial complex I and therefore plays a role in oxidative phosphorylation. The protein is Complex I assembly factor Egm, mitochondrial of Drosophila melanogaster (Fruit fly).